A 194-amino-acid chain; its full sequence is Thioredoxin peroxidase (194 aa).

Positions 2 to 160 (LQPNMPAPNF…ALRLLDAFIF (159 aa)) constitute a Thioredoxin domain. Cys47 serves as the catalytic Cysteine sulfenic acid (-SOH) intermediate.

Belongs to the peroxiredoxin family. AhpC/Prx1 subfamily. As to quaternary structure, homodimer; disulfide-linked, upon oxidation.

It catalyses the reaction a hydroperoxide + [thioredoxin]-dithiol = an alcohol + [thioredoxin]-disulfide + H2O. Its function is as follows. Antioxidant. Could be involved in protection against reactive oxygen species (ROS) generated by metabolic processes and/or protection of the parasite against ROS released by immune effector cells. In terms of biological role, thiol-specific peroxidase that catalyzes the reduction of hydrogen peroxide and organic hydroperoxides to water and alcohols, respectively. Plays a role in cell protection against oxidative stress by detoxifying peroxides and as sensor of hydrogen peroxide-mediated signaling events. The protein is Thioredoxin peroxidase of Fasciola hepatica (Liver fluke).